A 280-amino-acid chain; its full sequence is Ribosomal RNA-processing protein 7 homolog A (280 aa).

The RRM domain maps to 59–159 (RTLFVLNVPP…SGIHKWISDY (101 aa)). At S99 the chain carries Phosphoserine.

This sequence belongs to the RRP7 family. Part of the small subunit (SSU) processome, composed of more than 70 proteins and the RNA chaperone small nucleolar RNA (snoRNA) U3. Interacts with NOL6; required for NOL6 localization to nucleolus. In terms of tissue distribution, expressed in the apical radial glial cells in the developing brain.

It localises to the nucleus. Its subcellular location is the nucleolus. It is found in the cell projection. The protein resides in the cilium. The protein localises to the cytoplasm. It localises to the cytoskeleton. Its subcellular location is the microtubule organizing center. It is found in the centrosome. Functionally, nucleolar protein that is involved in ribosomal RNA (rRNA) processing. Also plays a role in primary cilia resorption, and cell cycle progression in neurogenesis and neocortex development. Part of the small subunit (SSU) processome, first precursor of the small eukaryotic ribosomal subunit. During the assembly of the SSU processome in the nucleolus, many ribosome biogenesis factors, an RNA chaperone and ribosomal proteins associate with the nascent pre-rRNA and work in concert to generate RNA folding, modifications, rearrangements and cleavage as well as targeted degradation of pre-ribosomal RNA by the RNA exosome. The protein is Ribosomal RNA-processing protein 7 homolog A of Homo sapiens (Human).